The sequence spans 364 residues: Monocarboxylate 2-oxoacid-binding periplasmic protein all3028 (364 aa).

Positions 1–26 (MKRREVLNTAAIATATTALVSCTQTN) are cleaved as a signal peptide. Substrate-binding positions include 103–104 (YY), glutamine 160, and arginine 181. Glutamine 160 provides a ligand contact to Na(+). 3 residues coordinate Na(+): glutamate 218, tryptophan 219, and glutamate 244.

Belongs to the bacterial solute-binding protein 7 family. Homodimer. The complex comprises the extracytoplasmic solute receptor protein all3028, and the two putative transmembrane proteins alr3026 and alr3027.

The protein localises to the periplasm. Its activity is regulated as follows. Pyruvate uptake inhibited by 2-oxobutyrate, 2-oxovalerate, 2-oxoisovalerate, 2-oxoisocaproate and 2-oxo-3-methylvalerate. Part of the tripartite ATP-independent periplasmic (TRAP) transport system involved in the uptake of monocarboxylate 2-oxoacids. This protein specifically binds monocarboxylate 2-oxoacids including pyruvate, 2-oxobutyrate, 2-oxovalerate, 2-oxoisovalerate, 2-oxoisocaproate and 2-oxo-3-methylvalerate. Is not able to bind mannitol. The polypeptide is Monocarboxylate 2-oxoacid-binding periplasmic protein all3028 (Nostoc sp. (strain PCC 7120 / SAG 25.82 / UTEX 2576)).